A 121-amino-acid chain; its full sequence is Holo-[acyl-carrier-protein] synthase (121 aa).

Mg(2+)-binding residues include D8 and E58.

The protein belongs to the P-Pant transferase superfamily. AcpS family. Mg(2+) serves as cofactor.

It localises to the cytoplasm. It catalyses the reaction apo-[ACP] + CoA = holo-[ACP] + adenosine 3',5'-bisphosphate + H(+). Its function is as follows. Transfers the 4'-phosphopantetheine moiety from coenzyme A to a Ser of acyl-carrier-protein. The chain is Holo-[acyl-carrier-protein] synthase from Bacillus velezensis (strain DSM 23117 / BGSC 10A6 / LMG 26770 / FZB42) (Bacillus amyloliquefaciens subsp. plantarum).